The following is a 419-amino-acid chain: MSDKFQSIKGFYDILPADTALWQRIEDSARQVLSQYGYRNIRLPIVEPTELFIRGVGEHTDIVEKEMYSWEDKLNGDRLTLRPEGTAGCVRAVVEHSLTYNGPQRLWYMGPMFRHENVQKGRQRQFHQIGAEAFGYTGPDVDAEQISMLARLWRELGVANEVELQLNTIGDASERAQYRQVLIRYFEQHESLLDDDAKRRLYANPLRILDSKNPAMQTMIEAAPKLLDSLGEESRAHFDGVTRQLDQLGIKWTLNTRLVRGLDYYNRTVFEWVTNKLGSQGTIAGGGRYDSLVQSLGGKETPACGFGIGLERVFLLMRECGIEAFHSPDVYLVNVGDAANKAALPIAEALRDSGLSVSLHAGGGSFKSQMKKADQSGAQYALILGDDEIAANEVCLKPLRENGEQRRMSLSQAIEALHT.

The protein belongs to the class-II aminoacyl-tRNA synthetase family. As to quaternary structure, homodimer.

It is found in the cytoplasm. The enzyme catalyses tRNA(His) + L-histidine + ATP = L-histidyl-tRNA(His) + AMP + diphosphate + H(+). The polypeptide is Histidine--tRNA ligase (Methylobacillus flagellatus (strain ATCC 51484 / DSM 6875 / VKM B-1610 / KT)).